The chain runs to 465 residues: uncharacterized protein (465 aa).

Disordered stretches follow at residues Met1 to Gln55, Asp70 to Gln164, and Thr221 to Val313. Residues Glu40 to Asn50 are compositionally biased toward basic and acidic residues. The span at Glu73–Lys82 shows a compositional bias: polar residues. Positions Asn83–Asn134 are enriched in low complexity. The span at Glu141–Glu150 shows a compositional bias: basic and acidic residues. Positions Thr221–Asn235 are enriched in low complexity. Basic and acidic residues-rich tracts occupy residues Val236–Pro249 and Ile259–Lys275. Residues Ile288–Lys306 are compositionally biased toward polar residues. Residues Asn390–Ser423 adopt a coiled-coil conformation.

This is an uncharacterized protein from Acanthamoeba polyphaga mimivirus (APMV).